A 224-amino-acid chain; its full sequence is Probable GTP-binding protein EngB (224 aa).

The EngB-type G domain occupies 31-204 (VGVEIAFAGR…LGILDQWCKP (174 aa)). GTP is bound by residues 39–46 (GRSNAGKS), 65–69 (GRTQL), 83–86 (DLPG), 150–153 (TKAD), and 183–185 (FSS). The Mg(2+) site is built by S46 and T67.

It belongs to the TRAFAC class TrmE-Era-EngA-EngB-Septin-like GTPase superfamily. EngB GTPase family. Requires Mg(2+) as cofactor.

In terms of biological role, necessary for normal cell division and for the maintenance of normal septation. This chain is Probable GTP-binding protein EngB, found in Shewanella piezotolerans (strain WP3 / JCM 13877).